Reading from the N-terminus, the 740-residue chain is Platelet endothelial cell adhesion molecule (740 aa).

The signal sequence occupies residues M1 to G27. Topologically, residues Q28–K602 are extracellular. Ig-like C2-type domains are found at residues N35 to V126, G145 to R223, and P236 to S315. Residues N52 and N84 are each glycosylated (N-linked (GlcNAc...) asparagine). 3 cysteine pairs are disulfide-bonded: C57–C109, C152–C206, and C256–C304. Residues N284, N301, N320, N357, N372, N436, N456, and N552 are each glycosylated (N-linked (GlcNAc...) asparagine). Ig-like C2-type domains lie at P328 to A404, G425 to R494, and P500 to A592. 3 disulfide bridges follow: C347-C387, C432-C477, and C524-C573. A helical membrane pass occupies residues G603–A621. Residues R622–T740 are Cytoplasmic-facing. Short sequence motifs (ITIM motif) lie at residues V690–V695 and T713–I718. Phosphotyrosine; by FER occurs at positions 692 and 715. The tract at residues V697–T740 is disordered. The tract at residues T711–S731 is membrane-bound segment which detaches upon phosphorylation. A compositionally biased stretch (basic and acidic residues) spans E717–R732. The may play a role in cytoprotective signaling stretch occupies residues P723–T740. Residues S731 and S736 each carry the phosphoserine modification.

As to quaternary structure, trans-homodimer (via Ig-like C2-type 1 and Ig-like C2-type 2 domains); trans-homodimerization is required for cell-cell interaction. Forms a complex with BDKRB2 and GNAQ. Interacts with BDKRB2 and GNAQ. Interacts with PTPN11; Tyr-715 is critical for PTPN11 recruitment. Interacts with FER. Interacts with CD177; the interaction is Ca(2+)-dependent; the interaction is direct. Post-translationally, phosphorylated on Ser and Tyr residues by src kinases after cellular activation. Upon activation, phosphorylated on Ser-731 which probably initiates the dissociation of the membrane-interaction segment (residues 711-731) from the cell membrane allowing the sequential phosphorylation of Tyr-715 and Tyr-692. Constitutively phosphorylated on Ser-736 in resting platelets. Phosphorylated on tyrosine residues by FER and FES in response to FCER1 activation. In endothelial cells Fyn mediates mechanical-force (stretch or pull) induced tyrosine phosphorylation. Palmitoylation by ZDHHC21 is necessary for cell surface expression in endothelial cells and enrichment in membrane rafts.

The protein resides in the cell membrane. Its subcellular location is the membrane raft. It localises to the cell junction. Functionally, cell adhesion molecule which is required for leukocyte transendothelial migration (TEM) under most inflammatory conditions. Tyr-692 plays a critical role in TEM and is required for efficient trafficking of PECAM1 to and from the lateral border recycling compartment (LBRC) and is also essential for the LBRC membrane to be targeted around migrating leukocytes. Trans-homophilic interaction may play a role in endothelial cell-cell adhesion via cell junctions. Heterophilic interaction with CD177 plays a role in transendothelial migration of neutrophils. Homophilic ligation of PECAM1 prevents macrophage-mediated phagocytosis of neighboring viable leukocytes by transmitting a detachment signal. Promotes macrophage-mediated phagocytosis of apoptotic leukocytes by tethering them to the phagocytic cells; PECAM1-mediated detachment signal appears to be disabled in apoptotic leukocytes. Modulates bradykinin receptor BDKRB2 activation. Regulates bradykinin- and hyperosmotic shock-induced ERK1/2 activation in endothelial cells. Induces susceptibility to atherosclerosis. This Sus scrofa (Pig) protein is Platelet endothelial cell adhesion molecule (PECAM1).